The chain runs to 455 residues: Probable glycine dehydrogenase (decarboxylating) subunit 1 (455 aa).

This sequence belongs to the GcvP family. N-terminal subunit subfamily. The glycine cleavage system is composed of four proteins: P, T, L and H. In this organism, the P 'protein' is a heterodimer of two subunits.

The enzyme catalyses N(6)-[(R)-lipoyl]-L-lysyl-[glycine-cleavage complex H protein] + glycine + H(+) = N(6)-[(R)-S(8)-aminomethyldihydrolipoyl]-L-lysyl-[glycine-cleavage complex H protein] + CO2. In terms of biological role, the glycine cleavage system catalyzes the degradation of glycine. The P protein binds the alpha-amino group of glycine through its pyridoxal phosphate cofactor; CO(2) is released and the remaining methylamine moiety is then transferred to the lipoamide cofactor of the H protein. This is Probable glycine dehydrogenase (decarboxylating) subunit 1 from Saccharolobus islandicus (strain Y.N.15.51 / Yellowstone #2) (Sulfolobus islandicus).